Consider the following 253-residue polypeptide: uncharacterized protein (253 aa).

The interval 211-235 (DEPEPAQPTLTVPSAQPVSNRRGKP) is disordered. Positions 218–229 (PTLTVPSAQPVS) are enriched in polar residues.

This is an uncharacterized protein from Mycobacterium tuberculosis (strain CDC 1551 / Oshkosh).